Consider the following 575-residue polypeptide: Carboxylesterase 5A (575 aa).

A signal peptide spans 1–28 (MSGDWVRPGQALIWVIWIFGAIIEGSVT). Cys94 and Cys121 are joined by a disulfide. N-linked (GlcNAc...) asparagine glycosylation is present at Asn134. The Acyl-ester intermediate role is filled by Ser226. Cys280 and Cys291 are joined by a disulfide. Asn281 is a glycosylation site (N-linked (GlcNAc...) asparagine). Glu345 functions as the Charge relay system in the catalytic mechanism. N-linked (GlcNAc...) asparagine glycosylation is present at Asn363. His454 (charge relay system) is an active-site residue. Asn524 is a glycosylation site (N-linked (GlcNAc...) asparagine).

The protein belongs to the type-B carboxylesterase/lipase family. N-glycosylated.

It is found in the secreted. It catalyses the reaction a carboxylic ester + H2O = an alcohol + a carboxylate + H(+). Involved in the detoxification of xenobiotics and in the activation of ester and amide prodrugs. This Mus musculus (Mouse) protein is Carboxylesterase 5A (Ces5a).